Reading from the N-terminus, the 396-residue chain is Subtilisin-like protease 5 (396 aa).

The N-terminal stretch at Met-1–Ala-20 is a signal peptide. Residues Ala-21–His-116 constitute a propeptide that is removed on maturation. Residues Tyr-37–Ile-113 form the Inhibitor I9 domain. A glycan (N-linked (GlcNAc...) asparagine) is linked at Asn-63. The Peptidase S8 domain maps to Pro-125 to Arg-396. Residues Asp-156 and His-187 each act as charge relay system in the active site. Asn-230 and Asn-248 each carry an N-linked (GlcNAc...) asparagine glycan. Ser-342 (charge relay system) is an active-site residue. Residues Thr-377 to Leu-389 are compositionally biased toward polar residues. The segment at Thr-377–Arg-396 is disordered. A glycan (N-linked (GlcNAc...) asparagine) is linked at Asn-392.

The protein belongs to the peptidase S8 family.

The protein localises to the secreted. Secreted subtilisin-like serine protease with keratinolytic activity that contributes to pathogenicity. This chain is Subtilisin-like protease 5 (SUB5), found in Arthroderma benhamiae (Trichophyton mentagrophytes).